We begin with the raw amino-acid sequence, 149 residues long: MQVILLDKVANLGSLGDQVNVKAGYARNFLVPQGKAVPATKKNVEFFEARRAELEAKLADVLAAANARAEKINALETVTIASKAGDEGKLFGSIGTRDIADAVTAAGVEVAKSEVRLPNGVLRTTGEHEVNFQVHSEVFAKLTVNVVAE.

The protein belongs to the bacterial ribosomal protein bL9 family.

Binds to the 23S rRNA. In Citrobacter koseri (strain ATCC BAA-895 / CDC 4225-83 / SGSC4696), this protein is Large ribosomal subunit protein bL9.